The primary structure comprises 447 residues: MEFTASPKPQLSSRANAFSIAALMSSGGSKEKEATENTIKPLEQFVEKSSCAQPLGELTSLDAHGEFGGGSGSSPSSSSLCTEPLIPTTPIIPSEEMAKIACSLETKELWDKFHELGTEMIITKSGRRMFPTIRVSFSGVDPEAKYIVLMDIVPVDNKRYRYAYHRSSWLVAGKADPPLPARLYVHPDSPFTGEQLLKQMVSFEKVKLTNNELDQHGHIILNSMHKYQPRVHIIKKKDHTASLLNLKSEEFRTFIFPETVFTAVTAYQNQLITKLKIDSNPFAKGFRDSSRLTDIERESVESLIQKHSYARSPIRTYGGEEDVLGDESQTTPNRGSAFTTSDNLSLSSWVSSSSSFPGFQHPQSLTALGTSTASIATPIPHPIQGSLPPYSRLGMPLTPSAIASSMQGSGPTFPSFHMPRYHHYFQQGPYAAIQGLRHSSAVMTPFV.

The interval 62-81 (DAHGEFGGGSGSSPSSSSLC) is disordered. The segment at residues 109–288 (LWDKFHELGT…SNPFAKGFRD (180 aa)) is a DNA-binding region (T-box). The segment at 316–340 (TYGGEEDVLGDESQTTPNRGSAFTT) is disordered. Over residues 327-340 (ESQTTPNRGSAFTT) the composition is skewed to polar residues.

It is found in the nucleus. In terms of biological role, acts as a transcriptional activator and repressor required for cardiac development and may have key roles in the maintenance of functional and structural phenotypes in adult heart. This is T-box transcription factor TBX20 (TBX20) from Homo sapiens (Human).